A 205-amino-acid polypeptide reads, in one-letter code: Proteasome subunit beta (205 aa).

The propeptide at 1-9 is removed in mature form; by autocatalysis; the sequence is MNQTENMEG. The active-site Nucleophile is the T10.

This sequence belongs to the peptidase T1B family. In terms of assembly, the 20S proteasome core is composed of 14 alpha and 14 beta subunits that assemble into four stacked heptameric rings, resulting in a barrel-shaped structure. The two inner rings, each composed of seven catalytic beta subunits, are sandwiched by two outer rings, each composed of seven alpha subunits. The catalytic chamber with the active sites is on the inside of the barrel. Has a gated structure, the ends of the cylinder being occluded by the N-termini of the alpha-subunits. Is capped at one or both ends by the proteasome regulatory ATPase, PAN.

It is found in the cytoplasm. It carries out the reaction Cleavage of peptide bonds with very broad specificity.. The formation of the proteasomal ATPase PAN-20S proteasome complex, via the docking of the C-termini of PAN into the intersubunit pockets in the alpha-rings, triggers opening of the gate for substrate entry. Interconversion between the open-gate and close-gate conformations leads to a dynamic regulation of the 20S proteasome proteolysis activity. In terms of biological role, component of the proteasome core, a large protease complex with broad specificity involved in protein degradation. In Methanosphaera stadtmanae (strain ATCC 43021 / DSM 3091 / JCM 11832 / MCB-3), this protein is Proteasome subunit beta.